The following is a 245-amino-acid chain: Protein ARV 1 (245 aa).

Transmembrane regions (helical) follow at residues I70–L90, I117–A137, I163–I183, T200–Q220, and P224–I244.

The protein belongs to the ARV1 family. In terms of tissue distribution, restricted to tissues in which cells are actively dividing or expanding. Mostly expressed in roots and flowers, and, to a lower extent, in stems and leaves.

Its subcellular location is the endoplasmic reticulum membrane. Mediator of sterol homeostasis involved in sterol uptake, trafficking and distribution into membranes. Also regulates the sphingolipid metabolism. The polypeptide is Protein ARV 1 (Arabidopsis thaliana (Mouse-ear cress)).